The primary structure comprises 207 residues: Cytochrome c biogenesis ATP-binding export protein CcmA (207 aa).

Residues 4 to 207 enclose the ABC transporter domain; that stretch reads LEVRELLCER…RISLTQTRAV (204 aa). 36-43 serves as a coordination point for ATP; sequence GSNGAGKT.

The protein belongs to the ABC transporter superfamily. CcmA exporter (TC 3.A.1.107) family. In terms of assembly, the complex is composed of two ATP-binding proteins (CcmA) and two transmembrane proteins (CcmB).

It localises to the cell inner membrane. The catalysed reaction is heme b(in) + ATP + H2O = heme b(out) + ADP + phosphate + H(+). In terms of biological role, part of the ABC transporter complex CcmAB involved in the biogenesis of c-type cytochromes; once thought to export heme, this seems not to be the case, but its exact role is uncertain. Responsible for energy coupling to the transport system. This is Cytochrome c biogenesis ATP-binding export protein CcmA from Shigella dysenteriae serotype 1 (strain Sd197).